The primary structure comprises 692 residues: Peroxisomal primary amine oxidase (692 aa).

A compositionally biased stretch (low complexity) spans 1-22 (MERLRQIASQATAASAAPARPA). Residues 1 to 26 (MERLRQIASQATAASAAPARPAHPLD) are disordered. N243 carries an N-linked (GlcNAc...) asparagine glycan. 317-328 (ALDIGEYGAGYM) provides a ligand contact to substrate. The active-site Proton acceptor is the D319. Residues C338 and C364 are joined by a disulfide bond. 402–407 (AANYEY) contacts substrate. The active-site Schiff-base intermediate with substrate; via topaquinone is Y405. Residue Y405 is modified to 2',4',5'-topaquinone. Cu cation is bound by residues H456 and H458. 3 residues coordinate Mn(2+): D465, D613, and I614. H624 is a binding site for Cu cation.

It belongs to the copper/topaquinone oxidase family. In terms of assembly, homodimer. The cofactor is Cu cation. Requires Zn(2+) as cofactor. L-topaquinone serves as cofactor. Mn(2+) is required as a cofactor. Topaquinone (TPQ) is generated by copper-dependent autoxidation of a specific tyrosyl residue.

The protein localises to the peroxisome. The enzyme catalyses a primary methyl amine + O2 + H2O = an aldehyde + H2O2 + NH4(+). This chain is Peroxisomal primary amine oxidase (AMO), found in Pichia angusta (Yeast).